A 261-amino-acid polypeptide reads, in one-letter code: Probable pectin methylesterase CGR2 (261 aa).

Topologically, residues 1-35 are cytoplasmic; it reads MARRQVGSTRRVGDGGSFPFAGALHSKSRSSPLLS. The chain crosses the membrane as a helical span at residues 36–56; that stretch reads ICLVLVGACLLIGYAYSGPGI. At 57 to 261 the chain is on the lumenal side; sequence FKSIKEVSKV…CQVFHLKPLH (205 aa). N174 is a glycosylation site (N-linked (GlcNAc...) asparagine).

This sequence belongs to the class I-like SAM-binding methyltransferase superfamily.

It is found in the golgi apparatus membrane. In terms of biological role, together with CGR3, required for homogalacturonan pectins (HG) methylesterification in the Golgi apparatus prior to integration into cell walls, essential for general growth and development. Promotes rosette growth. Impacts carbon (C) partitioning, photosynthesis and respiration efficiency by influencing leaf mesophyll cell walls morphology and physiology; pectin methylesterification modulates both expansion and positioning of cells in leaves, probably by changing cell walls plasticity. The polypeptide is Probable pectin methylesterase CGR2 (Arabidopsis thaliana (Mouse-ear cress)).